A 346-amino-acid polypeptide reads, in one-letter code: Ribosomal RNA small subunit methyltransferase H (346 aa).

Residues 46–48 (GGY), aspartate 63, phenylalanine 90, aspartate 113, and glutamine 120 each bind S-adenosyl-L-methionine. The segment at 270–346 (GGSAGSRHMP…LPETNELARS (77 aa)) is disordered.

Belongs to the methyltransferase superfamily. RsmH family.

Its subcellular location is the cytoplasm. The catalysed reaction is cytidine(1402) in 16S rRNA + S-adenosyl-L-methionine = N(4)-methylcytidine(1402) in 16S rRNA + S-adenosyl-L-homocysteine + H(+). Its function is as follows. Specifically methylates the N4 position of cytidine in position 1402 (C1402) of 16S rRNA. The sequence is that of Ribosomal RNA small subunit methyltransferase H from Brucella suis (strain ATCC 23445 / NCTC 10510).